We begin with the raw amino-acid sequence, 197 residues long: Holliday junction branch migration complex subunit RuvA (197 aa).

The segment at 1 to 64 is domain I; that stretch reads MIGRLSGKLI…EDAHLLYGFA (64 aa). A domain II region spans residues 65 to 143; that stretch reads SKEERQTFRQ…TGGNLTVPGG (79 aa). The interval 143–147 is flexible linker; that stretch reads GLPFA. The domain III stretch occupies residues 148-197; the sequence is ATPDEKSDIVNALLALGYNEKEAAAATKSLPADVTVSEGVRLALKSLMKV.

It belongs to the RuvA family. In terms of assembly, homotetramer. Forms an RuvA(8)-RuvB(12)-Holliday junction (HJ) complex. HJ DNA is sandwiched between 2 RuvA tetramers; dsDNA enters through RuvA and exits via RuvB. An RuvB hexamer assembles on each DNA strand where it exits the tetramer. Each RuvB hexamer is contacted by two RuvA subunits (via domain III) on 2 adjacent RuvB subunits; this complex drives branch migration. In the full resolvosome a probable DNA-RuvA(4)-RuvB(12)-RuvC(2) complex forms which resolves the HJ.

It is found in the cytoplasm. In terms of biological role, the RuvA-RuvB-RuvC complex processes Holliday junction (HJ) DNA during genetic recombination and DNA repair, while the RuvA-RuvB complex plays an important role in the rescue of blocked DNA replication forks via replication fork reversal (RFR). RuvA specifically binds to HJ cruciform DNA, conferring on it an open structure. The RuvB hexamer acts as an ATP-dependent pump, pulling dsDNA into and through the RuvAB complex. HJ branch migration allows RuvC to scan DNA until it finds its consensus sequence, where it cleaves and resolves the cruciform DNA. The protein is Holliday junction branch migration complex subunit RuvA of Chromobacterium violaceum (strain ATCC 12472 / DSM 30191 / JCM 1249 / CCUG 213 / NBRC 12614 / NCIMB 9131 / NCTC 9757 / MK).